The following is a 338-amino-acid chain: Tetraacyldisaccharide 4'-kinase (338 aa).

Position 51–58 (51–58 (HLGGAGKT)) interacts with ATP.

Belongs to the LpxK family.

It catalyses the reaction a lipid A disaccharide + ATP = a lipid IVA + ADP + H(+). The protein operates within glycolipid biosynthesis; lipid IV(A) biosynthesis; lipid IV(A) from (3R)-3-hydroxytetradecanoyl-[acyl-carrier-protein] and UDP-N-acetyl-alpha-D-glucosamine: step 6/6. Its function is as follows. Transfers the gamma-phosphate of ATP to the 4'-position of a tetraacyldisaccharide 1-phosphate intermediate (termed DS-1-P) to form tetraacyldisaccharide 1,4'-bis-phosphate (lipid IVA). The chain is Tetraacyldisaccharide 4'-kinase from Rhodopseudomonas palustris (strain HaA2).